The chain runs to 1456 residues: DNA polymerase gamma, mitochondrial (1456 aa).

Residues 1–41 constitute a mitochondrion transit peptide; that stretch reads MLTPVRCRTVPNATVATAARVLRRANLFSRYPRQLGHLRWD. Disordered stretches follow at residues 1200–1266 and 1308–1443; these read APEM…SLDD and AVTT…SWKP. The segment covering 1204 to 1239 has biased composition (low complexity); sequence AAVPSTSSESKSKASATTSTTTTENATASPSSSSNV. Pro residues predominate over residues 1315–1325; it reads PEPPTNPPPVA. 2 stretches are compositionally biased toward low complexity: residues 1346–1371 and 1411–1428; these read PKNP…TPKP and TASV…ATAT.

Belongs to the DNA polymerase type-A family. It depends on Mg(2+) as a cofactor.

It is found in the mitochondrion. The enzyme catalyses DNA(n) + a 2'-deoxyribonucleoside 5'-triphosphate = DNA(n+1) + diphosphate. In terms of biological role, involved in the replication of mitochondrial DNA. This chain is DNA polymerase gamma, mitochondrial (mip-1), found in Neurospora crassa (strain ATCC 24698 / 74-OR23-1A / CBS 708.71 / DSM 1257 / FGSC 987).